The chain runs to 457 residues: MGSDRWKNIGGTPQMEDSAQEKTQRKGCGYILCTVLLSVAVLLAVTVTGAVLFMNHYHAPSTEPPPVITTNMEDPNALVTIERADSSHINIFIDPNCPDPFPRLDGLQSALLSALADHDSEQKVAGGKERVLLTSLSDQVAQMVSQVARQRADWEIVKKVQNGLGAEIGALKNEQGRLIKLLSEGQSHVVQLGSSVSEVLETVQRELGSGRPRLKADLQRAPSRNSRPRGCANGSKPRDCYDIYMSGQQEDGVYSVFPIHYPSGFQVFCDMTTDGGGWTVFQRREDGSVNFFQGWEQYRDGFGKLTGEHWLGLQRIHLLTMQTHYQLRIDLEDFENATAYALYNTFGVGLFSVNPEEDGYPITVSDYTGTAGDSLGKHSGMKFTTKDMDNDHSENNCASFYHGAWWYRNCHTSNLNGQYLTGHHASYADGIEWSSWTGWQYSLKFTEMKIRPQREEN.

A disordered region spans residues 1-20 (MGSDRWKNIGGTPQMEDSAQ). Residues 1-33 (MGSDRWKNIGGTPQMEDSAQEKTQRKGCGYILC) are Cytoplasmic-facing. The chain crosses the membrane as a helical; Signal-anchor for type II membrane protein span at residues 34 to 54 (TVLLSVAVLLAVTVTGAVLFM). Topologically, residues 55-457 (NHYHAPSTEP…MKIRPQREEN (403 aa)) are extracellular. Residues 216 to 235 (ADLQRAPSRNSRPRGCANGS) form a disordered region. One can recognise a Fibrinogen C-terminal domain in the interval 231 to 454 (CANGSKPRDC…FTEMKIRPQR (224 aa)). Asparagine 233 carries N-linked (GlcNAc...) asparagine glycosylation. A disulfide bridge connects residues cysteine 240 and cysteine 269. An N-linked (GlcNAc...) asparagine glycan is attached at asparagine 336. The Ca(2+) site is built by aspartate 389 and aspartate 391. Cysteine 397 and cysteine 410 form a disulfide bridge.

As to quaternary structure, homotetramer; disulfide-linked.

The protein localises to the membrane. Functionally, acetyl group-binding receptor which shows a calcium-dependent binding to acetylated structures such as chitin, some N-acetylated carbohydrates, and amino acids. This is Fibrinogen C domain-containing protein 1-A (fibcd1-a) from Xenopus laevis (African clawed frog).